The following is a 435-amino-acid chain: Tubulin-like protein TubZ (435 aa).

Residues 25-26, 124-126, Asn-185, and Asn-209 contribute to the GTP site; these read MG and GTG. Residues 403-435 form a disordered region; the sequence is QEEKPKKKKLNFGAEPEAEVADDSQPTKKKLSF.

This sequence belongs to the FtsZ family. TubZ subfamily. In terms of assembly, polymerizes to form two-stranded filaments and bundles at higher concentration in the presence of GTP. Binds to the TubR-tubC protein DNA complex.

Its subcellular location is the cytoplasm. The enzyme catalyses GTP + H2O = GDP + phosphate + H(+). GTPase inhibited by GTP-gamma-S, which also stabilizes filaments. In terms of biological role, a tubulin-like, filament forming GTPase; the motor component of the type III plasmid partition system which ensures correct segregation of the pXO1 plasmid. Essential for plasmid replication. The filaments seed from a DNA centromere-like site (tubC)-TubR complex which extends to surround the TubZ filaments. Highly dynamic filaments grow at the plus end and depolymerize at the minus end, a process called treadmilling. TubR-tubC complexes track the depolymerizing minus end of the filament, probably pulling plasmid within the cell. Has a high GTPase activity; in the presence of GTP assembles into dynamic filaments which bind almost exclusively GDP. Filament formation is cooperative, requiring a critical concentration. Formation occurs very quickly and is followed by disassembly as GTP is consumed. Small amounts of GTP-gamma-S stabilize filaments. Has high GTP and dGTPase activity, 6-fold lower ATPase activity. Forms filaments in the presence of ATP that also disassemble. Weakly binds DNA in a GTP-dependent, non-sequence-specific manner; GTP hydrolysis is not required for DNA-binding. In Bacillus anthracis, this protein is Tubulin-like protein TubZ.